Consider the following 226-residue polypeptide: MIIIDDLLTKDEVTQFRQQLASVPFNDGKSTAMGMAAGVKNNGQADAQDSRVQQLANALLSKLGNNPTVISGALPQRIFPPCFNRYSESQTYGYHVDAAIMRIPNTPDVLRSDMSMTVFLTPKEDYEGGELVIQTGFGEQKVKCDAGSAILYPSSSLHKVTPVTKGERIAAITWIQSMVSDQQMRETLFQLDQSIQSLVNVGTAEREQLDGLHHVYHNLVRKFSQV.

Positions Arg77 to Ser177 constitute a Fe2OG dioxygenase domain. Fe cation-binding residues include His95, Asp97, and His158. A 2-oxoglutarate-binding site is contributed by Arg168.

The cofactor is Fe(2+). L-ascorbate serves as cofactor.

In Alteromonas mediterranea (strain DSM 17117 / CIP 110805 / LMG 28347 / Deep ecotype), this protein is PKHD-type hydroxylase MADE_1018490.